Consider the following 691-residue polypeptide: Proprotein convertase subtilisin/kexin type 9 (691 aa).

The N-terminal stretch at 1–29 (MGTVSSRRLWWPLPLLLLLLLLGPAGARA) is a signal peptide. The propeptide occupies 30 to 151 (QEDDDGDYEE…IEEDSSVFAQ (122 aa)). Sulfotyrosine is present on tyrosine 37. A Phosphoserine modification is found at serine 46. The region spanning 76–148 (TYVVVLKEET…VDYIEEDSSV (73 aa)) is the Inhibitor I9 domain. The 307-residue stretch at 154–460 (PWNLERITPA…GWQLFCRTVW (307 aa)) folds into the Peptidase S8 domain. Catalysis depends on charge relay system residues aspartate 185 and histidine 225. Intrachain disulfides connect cysteine 222/cysteine 254 and cysteine 322/cysteine 357. Serine 385 acts as the Charge relay system in catalysis. The segment at 449–691 (GAGWQLFCRT…HLAQASQELQ (243 aa)) is C-terminal domain. Disulfide bonds link cysteine 456–cysteine 526, cysteine 476–cysteine 525, and cysteine 485–cysteine 508. Asparagine 532 is a glycosylation site (N-linked (GlcNAc...) asparagine). Intrachain disulfides connect cysteine 533-cysteine 600, cysteine 551-cysteine 599, cysteine 561-cysteine 587, cysteine 607-cysteine 678, cysteine 625-cysteine 677, and cysteine 634-cysteine 653. Serine 687 is subject to Phosphoserine.

This sequence belongs to the peptidase S8 family. In terms of assembly, monomer. Can self-associate to form dimers and higher multimers which may have increased LDLR degrading activity. The precursor protein but not the mature protein may form multimers. Interacts with APOB, VLDLR, LRP8/APOER2 and BACE1. The full-length immature form (pro-PCSK9) interacts with SCNN1A, SCNN1B and SCNN1G. The pro-PCSK9 form (via C-terminal domain) interacts with LDLR. Interacts (via the C-terminal domain) with ANXA2 (via repeat Annexin 1); the interaction inhibits the degradation of LDLR. It depends on Ca(2+) as a cofactor. In terms of processing, cleavage by furin and PCSK5 generates a truncated inactive protein that is unable to induce LDLR degradation. Undergoes autocatalytic cleavage in the endoplasmic reticulum to release the propeptide from the N-terminus and the cleavage of the propeptide is strictly required for its maturation and activation. The cleaved propeptide however remains associated with the catalytic domain through non-covalent interactions, preventing potential substrates from accessing its active site. As a result, it is secreted from cells as a propeptide-containing, enzymatically inactive protein. Post-translationally, phosphorylation protects the propeptide against proteolysis.

It localises to the cytoplasm. It is found in the secreted. The protein localises to the endosome. Its subcellular location is the lysosome. The protein resides in the cell surface. It localises to the endoplasmic reticulum. It is found in the golgi apparatus. Its proteolytic activity is autoinhibited by the non-covalent binding of the propeptide to the catalytic domain. Inhibited by EGTA. In terms of biological role, crucial player in the regulation of plasma cholesterol homeostasis. Binds to low-density lipid receptor family members: low density lipoprotein receptor (LDLR), very low density lipoprotein receptor (VLDLR), apolipoprotein E receptor (LRP1/APOER) and apolipoprotein receptor 2 (LRP8/APOER2), and promotes their degradation in intracellular acidic compartments. Acts via a non-proteolytic mechanism to enhance the degradation of the hepatic LDLR through a clathrin LDLRAP1/ARH-mediated pathway. May prevent the recycling of LDLR from endosomes to the cell surface or direct it to lysosomes for degradation. Can induce ubiquitination of LDLR leading to its subsequent degradation. Inhibits intracellular degradation of APOB via the autophagosome/lysosome pathway in a LDLR-independent manner. Involved in the disposal of non-acetylated intermediates of BACE1 in the early secretory pathway. Inhibits epithelial Na(+) channel (ENaC)-mediated Na(+) absorption by reducing ENaC surface expression primarily by increasing its proteasomal degradation. Regulates neuronal apoptosis via modulation of LRP8/APOER2 levels and related anti-apoptotic signaling pathways. The chain is Proprotein convertase subtilisin/kexin type 9 (PCSK9) from Saimiri boliviensis boliviensis (Bolivian squirrel monkey).